Consider the following 424-residue polypeptide: Histidine--tRNA ligase (424 aa).

It belongs to the class-II aminoacyl-tRNA synthetase family. Homodimer.

The protein resides in the cytoplasm. It catalyses the reaction tRNA(His) + L-histidine + ATP = L-histidyl-tRNA(His) + AMP + diphosphate + H(+). This Shigella sonnei (strain Ss046) protein is Histidine--tRNA ligase.